The primary structure comprises 369 residues: Histidinol-phosphate aminotransferase 3 (369 aa).

Position 220 is an N6-(pyridoxal phosphate)lysine (Lys220).

It belongs to the class-II pyridoxal-phosphate-dependent aminotransferase family. Histidinol-phosphate aminotransferase subfamily. Homodimer. Requires pyridoxal 5'-phosphate as cofactor.

The catalysed reaction is L-histidinol phosphate + 2-oxoglutarate = 3-(imidazol-4-yl)-2-oxopropyl phosphate + L-glutamate. It participates in amino-acid biosynthesis; L-histidine biosynthesis; L-histidine from 5-phospho-alpha-D-ribose 1-diphosphate: step 7/9. The sequence is that of Histidinol-phosphate aminotransferase 3 (hisC3) from Mesorhizobium japonicum (strain LMG 29417 / CECT 9101 / MAFF 303099) (Mesorhizobium loti (strain MAFF 303099)).